The sequence spans 89 residues: Small ribosomal subunit protein uS15 (89 aa).

Belongs to the universal ribosomal protein uS15 family. Part of the 30S ribosomal subunit. Forms a bridge to the 50S subunit in the 70S ribosome, contacting the 23S rRNA.

One of the primary rRNA binding proteins, it binds directly to 16S rRNA where it helps nucleate assembly of the platform of the 30S subunit by binding and bridging several RNA helices of the 16S rRNA. Its function is as follows. Forms an intersubunit bridge (bridge B4) with the 23S rRNA of the 50S subunit in the ribosome. In Chlorobaculum parvum (strain DSM 263 / NCIMB 8327) (Chlorobium vibrioforme subsp. thiosulfatophilum), this protein is Small ribosomal subunit protein uS15.